The chain runs to 330 residues: tRNA uridine(34) hydroxylase (330 aa).

One can recognise a Rhodanese domain in the interval Ser123–Ser217. Cys177 acts as the Cysteine persulfide intermediate in catalysis. The segment at Leu310 to Ile330 is disordered. Positions Gln317 to Ile330 are enriched in basic and acidic residues.

The protein belongs to the TrhO family.

The enzyme catalyses uridine(34) in tRNA + AH2 + O2 = 5-hydroxyuridine(34) in tRNA + A + H2O. Catalyzes oxygen-dependent 5-hydroxyuridine (ho5U) modification at position 34 in tRNAs. This chain is tRNA uridine(34) hydroxylase, found in Francisella philomiragia subsp. philomiragia (strain ATCC 25017 / CCUG 19701 / FSC 153 / O#319-036).